Consider the following 399-residue polypeptide: MADGIDRRADDRMEFNTSKEVTVAPTFEDMHLKESLLRGIYAYGYESPSAVQSRAIVQICKGRDTIAQAQSGTGKTATFSISILQVIDTVVRESQALVLSPTRELATQIQSVIMALGDYMNVQCHACIGGTNIGEDIRKLDYGQHVVSGTPGRVADMIRRRHLRTRHIKMLVLDEADELLNRGFREQIYDVYRYLPPATQVVVVSATLPYDVLDMTTKFMTDPVRVLVKRDELTLEGIKQYFIAVEKEEWKFDTLCDLYDTLTITQAVIFCNTRRKVDWLTDKMREANFTVSSMHGEMPQKERDSIMQDFRQGNSRVLISTDVWARGIDVQQVSLVINYDLPTNRENYIHRIGRSGRFGRKGVAINFVTSDDVRILRDIELYYSTQIDEMPMNVADLLS.

Residues 25-53 (PTFEDMHLKESLLRGIYAYGYESPSAVQS) carry the Q motif motif. Residues 56–226 (IVQICKGRDT…TKFMTDPVRV (171 aa)) enclose the Helicase ATP-binding domain. 69–76 (AQSGTGKT) lines the ATP pocket. Residues 174–177 (DEAD) carry the DEAD box motif. A Helicase C-terminal domain is found at 237–398 (GIKQYFIAVE…EMPMNVADLL (162 aa)).

Belongs to the DEAD box helicase family. DDX48/FAL1 subfamily.

The protein resides in the nucleus. The protein localises to the nucleolus. It catalyses the reaction ATP + H2O = ADP + phosphate + H(+). Its function is as follows. ATP-dependent RNA helicase involved in 40S ribosomal subunit biogenesis. Required for the processing and cleavage of 35S pre-rRNA at sites A0, A1, and A2, leading to mature 18S rRNA. The sequence is that of ATP-dependent RNA helicase fal1 (fal1) from Aspergillus niger (strain ATCC MYA-4892 / CBS 513.88 / FGSC A1513).